Reading from the N-terminus, the 116-residue chain is Ribosome-binding factor A (116 aa).

Belongs to the RbfA family. Monomer. Binds 30S ribosomal subunits, but not 50S ribosomal subunits or 70S ribosomes.

Its subcellular location is the cytoplasm. Its function is as follows. One of several proteins that assist in the late maturation steps of the functional core of the 30S ribosomal subunit. Associates with free 30S ribosomal subunits (but not with 30S subunits that are part of 70S ribosomes or polysomes). Required for efficient processing of 16S rRNA. May interact with the 5'-terminal helix region of 16S rRNA. This Pediococcus pentosaceus (strain ATCC 25745 / CCUG 21536 / LMG 10740 / 183-1w) protein is Ribosome-binding factor A.